A 685-amino-acid polypeptide reads, in one-letter code: Probable serine/threonine-protein kinase CPE1738 (685 aa).

The region spanning 10-275 (YELLQCVGEG…LEKIKKDPNV (266 aa)) is the Protein kinase domain. Residues 16-24 (VGEGGMSFV) and K39 contribute to the ATP site. E143 acts as the Proton acceptor in catalysis. The tract at residues 277–339 (ISSKSAEDED…NIQTKPQKAI (63 aa)) is disordered. Residues 306–329 (EPDEDDEDDDEYYEDDEDEDEEEN) show a composition bias toward acidic residues. PASTA domains are found at residues 376–440 (GKDV…TVSG), 441–508 (GEGQ…TISK), 513–581 (KSET…TINY), and 589–648 (EKPK…TMEE). The interval 480-500 (VPRGEVISQSPNANESVDKGS) is disordered. Residues 623–685 (DTAKVKSVSN…PKQPEQSGNN (63 aa)) are disordered. Low complexity-rich tracts occupy residues 627 to 645 (VKSVSNSGEVEEGGSVSVT) and 654 to 685 (QPTQPNQPTQPTQPNQQAQPEQPKQPEQSGNN).

Belongs to the protein kinase superfamily. Ser/Thr protein kinase family.

It carries out the reaction L-seryl-[protein] + ATP = O-phospho-L-seryl-[protein] + ADP + H(+). It catalyses the reaction L-threonyl-[protein] + ATP = O-phospho-L-threonyl-[protein] + ADP + H(+). This Clostridium perfringens (strain 13 / Type A) protein is Probable serine/threonine-protein kinase CPE1738.